A 407-amino-acid polypeptide reads, in one-letter code: Argininosuccinate synthase (407 aa).

ATP-binding positions include 10 to 18 (AYSGGLDTS) and Ala-37. The L-citrulline site is built by Tyr-88 and Ser-93. Gly-118 lines the ATP pocket. Positions 120, 124, and 125 each coordinate L-aspartate. Asn-124 contacts L-citrulline. L-citrulline is bound by residues Arg-128, Ser-179, Ser-188, Glu-264, and Tyr-276.

It belongs to the argininosuccinate synthase family. Type 1 subfamily. Homotetramer.

The protein resides in the cytoplasm. The catalysed reaction is L-citrulline + L-aspartate + ATP = 2-(N(omega)-L-arginino)succinate + AMP + diphosphate + H(+). It participates in amino-acid biosynthesis; L-arginine biosynthesis; L-arginine from L-ornithine and carbamoyl phosphate: step 2/3. The chain is Argininosuccinate synthase from Jannaschia sp. (strain CCS1).